A 624-amino-acid chain; its full sequence is Basal cell adhesion molecule (624 aa).

The first 25 residues, 1-25, serve as a signal peptide directing secretion; it reads MEPPDARAGLLWLTLLLSGYSGAQA. Ig-like V-type domains follow at residues 26 to 136 and 141 to 251; these read ELHV…SSVR and PEAT…HTFR. The Extracellular segment spans residues 26 to 543; sequence ELHVSVPPRV…GSVAPQTAQA (518 aa). 3 disulfides stabilise this stretch: cysteine 47–cysteine 119, cysteine 166–cysteine 231, and cysteine 285–cysteine 331. 3 Ig-like C2-type domains span residues 268 to 343, 357 to 436, and 443 to 534; these read PSTT…EEVQ, PLEL…QSFQ, and PELK…FHFG. N-linked (GlcNAc...) asparagine glycans are attached at residues asparagine 315, asparagine 371, and asparagine 378. Intrachain disulfides connect cysteine 379/cysteine 419 and cysteine 468/cysteine 518. The disordered stretch occupies residues 477–497; sequence KLTWSQRGDTTPAEPPFEGRG. A helical transmembrane segment spans residues 544-564; it reads GVAVMAVAVSVGLLLLVVAAF. At 565-624 the chain is on the cytoplasmic side; the sequence is YCMRRKGRPGCCQRAEKGAPPAREPELSHSGSERPEHTGLLMGGPSGGGRGGNGGFGDEC. The tract at residues 574–624 is disordered; it reads GCCQRAEKGAPPAREPELSHSGSERPEHTGLLMGGPSGGGRGGNGGFGDEC. Residues 587 to 601 are compositionally biased toward basic and acidic residues; the sequence is REPELSHSGSERPEH. A phosphoserine mark is found at serine 592, serine 594, and serine 596. Gly residues predominate over residues 605–624; the sequence is LMGGPSGGGRGGNGGFGDEC.

As to quaternary structure, homodimer. Interacts with ITGA4:ITGB1. Interacts with spectrins SPTA1 and SPTB1.

The protein resides in the cell membrane. Its function is as follows. Transmembrane glycoprotein that functions as both a receptor and an adhesion molecule playing a crucial role in cell adhesion, motility, migration and invasion. Extracellular domain enables binding to extracellular matrix proteins, such as laminin, integrin and other ligands while its intracellular domain interacts with cytoskeletal proteins like hemoglobin, facilitating cell signal transduction. Serves as a receptor for laminin alpha-5/LAMA5 to promote cell adhesion. Mechanistically, JAK2 induces BCAM phosphorylation and activates its adhesion to laminin by stimulating a Rap1/AKT signaling pathway in the absence of EPOR. The chain is Basal cell adhesion molecule (Bcam) from Rattus norvegicus (Rat).